The chain runs to 156 residues: Small ribosomal subunit protein uS7 (156 aa).

It belongs to the universal ribosomal protein uS7 family. As to quaternary structure, part of the 30S ribosomal subunit. Contacts proteins S9 and S11.

Functionally, one of the primary rRNA binding proteins, it binds directly to 16S rRNA where it nucleates assembly of the head domain of the 30S subunit. Is located at the subunit interface close to the decoding center, probably blocks exit of the E-site tRNA. The polypeptide is Small ribosomal subunit protein uS7 (Solibacter usitatus (strain Ellin6076)).